The sequence spans 91 residues: Elongation factor 1-beta (91 aa).

The protein belongs to the EF-1-beta/EF-1-delta family.

Functionally, promotes the exchange of GDP for GTP in EF-1-alpha/GDP, thus allowing the regeneration of EF-1-alpha/GTP that could then be used to form the ternary complex EF-1-alpha/GTP/AAtRNA. This is Elongation factor 1-beta (ef1b) from Pyrococcus horikoshii (strain ATCC 700860 / DSM 12428 / JCM 9974 / NBRC 100139 / OT-3).